Here is a 169-residue protein sequence, read N- to C-terminus: Peptide methionine sulfoxide reductase MsrA (169 aa).

C10 is an active-site residue.

Belongs to the MsrA Met sulfoxide reductase family.

The enzyme catalyses L-methionyl-[protein] + [thioredoxin]-disulfide + H2O = L-methionyl-(S)-S-oxide-[protein] + [thioredoxin]-dithiol. The catalysed reaction is [thioredoxin]-disulfide + L-methionine + H2O = L-methionine (S)-S-oxide + [thioredoxin]-dithiol. Its function is as follows. Has an important function as a repair enzyme for proteins that have been inactivated by oxidation. Catalyzes the reversible oxidation-reduction of methionine sulfoxide in proteins to methionine. This chain is Peptide methionine sulfoxide reductase MsrA, found in Streptococcus pyogenes serotype M28 (strain MGAS6180).